The primary structure comprises 209 residues: Dephospho-CoA kinase (209 aa).

One can recognise a DPCK domain in the interval 13–209; the sequence is RIGLTGGIAT…AIEKVVVAEN (197 aa). Position 21 to 26 (21 to 26) interacts with ATP; that stretch reads ATGKST.

This sequence belongs to the CoaE family.

Its subcellular location is the cytoplasm. It catalyses the reaction 3'-dephospho-CoA + ATP = ADP + CoA + H(+). The protein operates within cofactor biosynthesis; coenzyme A biosynthesis; CoA from (R)-pantothenate: step 5/5. In terms of biological role, catalyzes the phosphorylation of the 3'-hydroxyl group of dephosphocoenzyme A to form coenzyme A. The sequence is that of Dephospho-CoA kinase from Synechococcus elongatus (strain ATCC 33912 / PCC 7942 / FACHB-805) (Anacystis nidulans R2).